The sequence spans 116 residues: Large ribosomal subunit protein bL19 (116 aa).

The protein belongs to the bacterial ribosomal protein bL19 family.

Its function is as follows. This protein is located at the 30S-50S ribosomal subunit interface and may play a role in the structure and function of the aminoacyl-tRNA binding site. The polypeptide is Large ribosomal subunit protein bL19 (Haemophilus influenzae (strain 86-028NP)).